Consider the following 491-residue polypeptide: D-xylose-proton symporter (491 aa).

The Cytoplasmic segment spans residues 1-9; it reads MNTQYNSSY. A helical transmembrane segment spans residues 10-30; sequence IFSITLVATLGGLLFGYDTAV. The Periplasmic segment spans residues 31–55; that stretch reads ISGTVESLNTVFVAPQNLSESAANS. The chain crosses the membrane as a helical span at residues 56–76; sequence LLGFCVASALIGCIIGGALGG. Residues 77 to 89 are Cytoplasmic-facing; the sequence is YCSNRFGRRDSLK. The helical transmembrane segment at 90–110 threads the bilayer; that stretch reads IAAVLFFISGVGSAWPELGFT. At 111–133 the chain is on the periplasmic side; that stretch reads SINPDNTVPVYLAGYVPEFVIYR. Residues 134-154 traverse the membrane as a helical segment; it reads IIGGIGVGLASMLSPMYIAEL. Residues 155-165 lie on the Cytoplasmic side of the membrane; sequence APAHIRGKLVS. A helical transmembrane segment spans residues 166-186; the sequence is FNQFAIIFGQLLVYCVNYFIA. Q168 is a binding site for beta-D-xylose. The Periplasmic portion of the chain corresponds to 187-200; sequence RSGDASWLNTDGWR. Residues 201–221 traverse the membrane as a helical segment; sequence YMFASECIPALLFLMLLYTVP. The Cytoplasmic segment spans residues 222–272; sequence ESPRWLMSRGKQEQAEGILRKIMGNTLATQAVQEIKHSLDHGRKTGGRLLM. Residues 273-293 traverse the membrane as a helical segment; the sequence is FGVGVIVIGVMLSIFQQFVGI. Residues 288 to 289 and N294 each bind beta-D-xylose; that span reads QQ. Over 294-312 the chain is Periplasmic; the sequence is NVVLYYAPEVFKTLGASTD. The chain crosses the membrane as a helical span at residues 313-333; sequence IALLQTIIVGVINLTFTVLAI. The Cytoplasmic segment spans residues 334–343; sequence MTVDKFGRKP. The chain crosses the membrane as a helical span at residues 344-364; sequence LQIIGALGMAIGMFSLGTAFY. Over 365 to 369 the chain is Periplasmic; sequence TQAPG. Residues 370 to 390 traverse the membrane as a helical segment; it reads IVALLSMLFYVAAFAMSWGPV. Topologically, residues 391–407 are cytoplasmic; sequence CWVLLSEIFPNAIRGKA. The beta-D-xylose site is built by W392 and Q415. The helical transmembrane segment at 408–428 threads the bilayer; that stretch reads LAIAVAAQWLANYFVSWTFPM. Topologically, residues 429–442 are periplasmic; that stretch reads MDKNSWLVAHFHNG. Residues 443–463 form a helical membrane-spanning segment; it reads FSYWIYGCMGVLAALFMWKFV. Residues 464-491 lie on the Cytoplasmic side of the membrane; it reads PETKGKTLEELEALWEPETKKTQQTATL.

It belongs to the major facilitator superfamily. Sugar transporter (TC 2.A.1.1) family.

Its subcellular location is the cell inner membrane. It catalyses the reaction D-xylose(in) + H(+)(in) = D-xylose(out) + H(+)(out). In terms of biological role, uptake of D-xylose across the boundary membrane with the concomitant transport of protons into the cell (symport system). The chain is D-xylose-proton symporter (xylE) from Escherichia coli O157:H7.